The primary structure comprises 364 residues: tRNA N6-adenosine threonylcarbamoyltransferase (364 aa).

Positions 118 and 122 each coordinate Fe cation. Residues 140–144, Asp-173, Gly-186, and Asn-288 contribute to the substrate site; that span reads LVSGG. A Fe cation-binding site is contributed by Asp-316.

Belongs to the KAE1 / TsaD family. Fe(2+) serves as cofactor.

The protein localises to the cytoplasm. It carries out the reaction L-threonylcarbamoyladenylate + adenosine(37) in tRNA = N(6)-L-threonylcarbamoyladenosine(37) in tRNA + AMP + H(+). Functionally, required for the formation of a threonylcarbamoyl group on adenosine at position 37 (t(6)A37) in tRNAs that read codons beginning with adenine. Is involved in the transfer of the threonylcarbamoyl moiety of threonylcarbamoyl-AMP (TC-AMP) to the N6 group of A37, together with TsaE and TsaB. TsaD likely plays a direct catalytic role in this reaction. The chain is tRNA N6-adenosine threonylcarbamoyltransferase from Cereibacter sphaeroides (strain ATCC 17023 / DSM 158 / JCM 6121 / CCUG 31486 / LMG 2827 / NBRC 12203 / NCIMB 8253 / ATH 2.4.1.) (Rhodobacter sphaeroides).